A 135-amino-acid polypeptide reads, in one-letter code: Early nodulin-5 (135 aa).

The signal sequence occupies residues 1-23; the sequence is MASSSSPIFLMIIFSMWLLFSYS.

As to expression, invasion zone and early symbiotic zone.

Involved in the infection process during the plant-rhizobium interaction. This chain is Early nodulin-5 (ENOD5), found in Pisum sativum (Garden pea).